We begin with the raw amino-acid sequence, 227 residues long: Deoxyribose-phosphate aldolase (227 aa).

Catalysis depends on aspartate 98, which acts as the Proton donor/acceptor. The active-site Schiff-base intermediate with acetaldehyde is lysine 161. Lysine 191 functions as the Proton donor/acceptor in the catalytic mechanism.

It belongs to the DeoC/FbaB aldolase family. DeoC type 1 subfamily.

The protein resides in the cytoplasm. It carries out the reaction 2-deoxy-D-ribose 5-phosphate = D-glyceraldehyde 3-phosphate + acetaldehyde. The protein operates within carbohydrate degradation; 2-deoxy-D-ribose 1-phosphate degradation; D-glyceraldehyde 3-phosphate and acetaldehyde from 2-deoxy-alpha-D-ribose 1-phosphate: step 2/2. In terms of biological role, catalyzes a reversible aldol reaction between acetaldehyde and D-glyceraldehyde 3-phosphate to generate 2-deoxy-D-ribose 5-phosphate. The protein is Deoxyribose-phosphate aldolase of Frankia alni (strain DSM 45986 / CECT 9034 / ACN14a).